The following is a 94-amino-acid chain: Large ribosomal subunit protein bL27 (94 aa).

Positions 1-9 (MNLANLQLF) are excised as a propeptide. The segment at 11–34 (HKKGGGSTSNGRDSQAKRLGAKAA) is disordered.

This sequence belongs to the bacterial ribosomal protein bL27 family. The N-terminus is cleaved by ribosomal processing cysteine protease Prp.

This is Large ribosomal subunit protein bL27 from Streptococcus pyogenes serotype M3 (strain ATCC BAA-595 / MGAS315).